The following is a 495-amino-acid chain: Type-1 histone deacetylase 1 (495 aa).

Position 94 (aspartate 94) interacts with substrate. The active-site Proton acceptor is the histidine 136. Glycine 144 is a substrate binding site. A divalent metal cation-binding residues include aspartate 171, histidine 173, and aspartate 259. Residue tyrosine 298 coordinates substrate. Positions 372–495 are disordered; that stretch reads PAAAHHDIPP…EDADVDMDSG (124 aa). The span at 396–413 shows a compositional bias: basic and acidic residues; the sequence is DVRISEADRDKKVHHQGE. Residues 425–443 are compositionally biased toward polar residues; that stretch reads NYSNGLEATSTSRRNQVSI. Low complexity predominate over residues 454–480; sequence NSRNNNNNNNNNNNNNNNNNNNSNNNN.

This sequence belongs to the histone deacetylase family. HD type 1 subfamily.

The protein localises to the nucleus. The protein resides in the cytoplasm. It carries out the reaction N(6)-acetyl-L-lysyl-[histone] + H2O = L-lysyl-[histone] + acetate. Responsible for the deacetylation of lysine residues on the N-terminal part of the core histones (H2A, H2B, H3 and H4). Histone deacetylation plays an important role in transcriptional regulation, cell cycle progression and developmental events. Histone deacetylases act via the formation of large multiprotein complexes. The polypeptide is Type-1 histone deacetylase 1 (hdaA) (Dictyostelium discoideum (Social amoeba)).